Here is a 435-residue protein sequence, read N- to C-terminus: Probable aminotransferase gliI (435 aa).

An N6-(pyridoxal phosphate)lysine modification is found at Lys-266.

The protein belongs to the class-I pyridoxal-phosphate-dependent aminotransferase family. Requires pyridoxal 5'-phosphate as cofactor.

It participates in mycotoxin biosynthesis. Probable aminotransferase; part of the gene cluster that mediates the biosynthesis of gliotoxin, a member of the epipolythiodioxopiperazine (ETP) class of toxins characterized by a disulfide bridged cyclic dipeptide. The first step in gliotoxin biosynthesis is the condensation of serine and phenylalanine to form the cyclo-L-phenylalanyl-L-serine diketopiperazine (DKP) by the NRPS gliP. GliP is also able to produce the DKP cyclo-L-tryptophanyl-L-serine, suggesting that the substrate specificity of the first adenylation (A) domain in gliP is sufficiently relaxed to accommodate both L-Phe and L-Trp. The cytochrome P450 monooxygenase gliC has been shown to catalyze the subsequent hydroxylation of the alpha-carbon of L-Phe in cyclo-L-phenylalanyl-L-serine whereas the second cytochrome P450 enzyme, gliF, is presumably involved in the modification of the DKP side chain. The glutathione S-transferase (GST) gliG then forms a bis-glutathionylated biosynthetic intermediate which is responsible for the sulfurization of gliotoxin. This bis-glutathionylated intermediate is subsequently processed by the gamma-glutamyl cyclotransferase gliK to remove both gamma-glutamyl moieties. Subsequent processing via gliI yields a biosynthetic intermediate, which is N-methylated via the N-methyltransferase gliN, before the gliotoxin oxidoreductase gliT-mediated disulfide bridge closure. GliN-mediated amide methylation confers stability to ETP, damping the spontaneous formation of tri- and tetrasulfides. Intracellular dithiol gliotoxin oxidized by gliT is subsequently effluxed by gliA. Gliotoxin contributes to pathogenesis during invasive aspergillosis. In macrophages and neutrophils, gliotoxin showed inhibition of various different cell functions including cytokine production, antigen presentation, phagocytosis, and production of reactive oxygen species. The protein is Probable aminotransferase gliI of Aspergillus fumigatus (strain ATCC MYA-4609 / CBS 101355 / FGSC A1100 / Af293) (Neosartorya fumigata).